Reading from the N-terminus, the 213-residue chain is ATP-dependent dethiobiotin synthetase BioD (213 aa).

13-18 (GIGKTV) is a binding site for ATP. Threonine 17 is a binding site for Mg(2+). Lysine 33 is an active-site residue. Glutamate 100 contacts Mg(2+). ATP-binding positions include 100 to 103 (EGAG) and 184 to 186 (PHL).

Belongs to the dethiobiotin synthetase family. In terms of assembly, homodimer. It depends on Mg(2+) as a cofactor.

It is found in the cytoplasm. The enzyme catalyses (7R,8S)-7,8-diammoniononanoate + CO2 + ATP = (4R,5S)-dethiobiotin + ADP + phosphate + 3 H(+). It participates in cofactor biosynthesis; biotin biosynthesis; biotin from 7,8-diaminononanoate: step 1/2. Catalyzes a mechanistically unusual reaction, the ATP-dependent insertion of CO2 between the N7 and N8 nitrogen atoms of 7,8-diaminopelargonic acid (DAPA, also called 7,8-diammoniononanoate) to form a ureido ring. The sequence is that of ATP-dependent dethiobiotin synthetase BioD from Rhodopseudomonas palustris (strain BisA53).